The sequence spans 559 residues: Chromatin assembly factor 1 subunit B (559 aa).

7 WD repeats span residues 11-54 (HNKE…DGKA), 64-103 (RHTK…EPEQ), 127-166 (GHLE…KISI), 169-208 (EHKS…VAFN), 228-279 (FHDD…RPIA), 299-340 (ELRP…PFGY), and 344-385 (IHYH…IPLK). The disordered stretch occupies residues 386–559 (EKPVLNMRTP…NKGGTESLDP (174 aa)). Threonine 394 is subject to Phosphothreonine. The residue at position 409 (serine 409) is a Phosphoserine. Threonine 419 carries the post-translational modification Phosphothreonine. The residue at position 429 (serine 429) is a Phosphoserine. The span at 430 to 444 (PGTTPPQARQAPAPT) shows a compositional bias: low complexity. Threonine 433 bears the Phosphothreonine mark. At serine 458 the chain carries Phosphoserine. Residues 469–495 (LQPSSQNTKAHPSRRVTLNTLQAWSKT) are compositionally biased toward polar residues. Lysine 494 carries the N6-acetyllysine modification. A phosphothreonine mark is found at threonine 495, threonine 509, threonine 521, and threonine 531. Residues 509–526 (TPPSSVPTSVISTPSTEE) are compositionally biased toward low complexity. Phosphoserine is present on serine 538. A compositionally biased stretch (basic and acidic residues) spans 541 to 552 (ELKRPRLDENKG).

It belongs to the WD repeat HIR1 family. In terms of assembly, subunit of the CAF-1 complex that contains RBBP4, CHAF1B and CHAF1A. CHAF1A binds directly to CHAF1B. Only minor amounts of RBBP4 are complexed with CHAF1A and CHAF1B in G1 phase. In G2 and S phase also monomeric CHAF1B is detected. Interacts with histones H3.1, H3.2 and H3.1t. Post-translationally, differentially phosphorylated during cell cycle. During mitosis the p60 subunit of inactive CAF-1 is hyperphosphorylated and displaced into the cytosol. Progressivly dephosphorylated from G1 to S and G2 phase. Phosphorylated p60 is recruited to chromatin undergoing DNA repair after UV irradiation in G1, S or G2 phases.

The protein resides in the nucleus. Its subcellular location is the cytoplasm. Functionally, acts as a component of the histone chaperone complex chromatin assembly factor 1 (CAF-1), which assembles histone octamers onto DNA during replication and repair. CAF-1 performs the first step of the nucleosome assembly process, bringing newly synthesized histones H3 and H4 to replicating DNA; histones H2A/H2B can bind to this chromatin precursor subsequent to DNA replication to complete the histone octamer. In Homo sapiens (Human), this protein is Chromatin assembly factor 1 subunit B.